The primary structure comprises 252 residues: RNA-binding protein 7 (252 aa).

An RRM domain is found at 9–86; the sequence is RTLFVGNLDP…RQLNIKFKTG (78 aa). Polar residues-rich tracts occupy residues 88–107 and 119–137; these read SHIN…SPAN and QMGS…PFSS. 2 disordered regions span residues 88-137 and 171-252; these read SHIN…PFSS and QLRG…WKHF. Basic and acidic residues-rich tracts occupy residues 211–230 and 237–252; these read ERNR…DRSG and PPDR…WKHF.

In terms of assembly, component of the nuclear exosome targeting (NEXT) complex composed of MTREX, ZCCHC8, and RBM7 that directs a subset of non-coding short-lived RNAs for exosomal degradation.

The protein resides in the nucleus. It localises to the nucleoplasm. Functionally, RNA-binding subunit of the trimeric nuclear exosome targeting (NEXT) complex, a complex that functions as an RNA exosome cofactor that directs a subset of non-coding short-lived RNAs for exosomal degradation. NEXT is involved in surveillance and turnover of aberrant transcripts and non-coding RNAs. Binds preferentially polyuridine sequences and associates with newly synthesized RNAs, including pre-mRNAs and short-lived exosome substrates such as promoter upstream transcripts (PROMPTs), enhancer RNAs (eRNAs), and 3'-extended products from small nuclear RNAs (snRNAs). In Danio rerio (Zebrafish), this protein is RNA-binding protein 7.